Consider the following 205-residue polypeptide: N-(5'-phosphoribosyl)anthranilate isomerase (205 aa).

This sequence belongs to the TrpF family.

It catalyses the reaction N-(5-phospho-beta-D-ribosyl)anthranilate = 1-(2-carboxyphenylamino)-1-deoxy-D-ribulose 5-phosphate. Its pathway is amino-acid biosynthesis; L-tryptophan biosynthesis; L-tryptophan from chorismate: step 3/5. In Thermotoga neapolitana (strain ATCC 49049 / DSM 4359 / NBRC 107923 / NS-E), this protein is N-(5'-phosphoribosyl)anthranilate isomerase.